Reading from the N-terminus, the 580-residue chain is Cleavage stimulation factor subunit 2 (580 aa).

At Ser-14 the chain carries Phosphoserine. The 79-residue stretch at 16 to 94 folds into the RRM domain; sequence RSVFVGNIPY…RALRVDNAAS (79 aa). Residues 108–248 are interactions with CSTF3 and SYMPK; sequence APVIESPYGE…VNGAPPMMQA (141 aa). Lys-189 is covalently cross-linked (Glycyl lysine isopeptide (Lys-Gly) (interchain with G-Cter in SUMO2)). Omega-N-methylarginine is present on Arg-308. 2 disordered regions span residues 311–331 and 347–414; these read LPTN…DPRG and LGPP…RGLD. 2 stretches are compositionally biased toward basic and acidic residues: residues 363-376 and 405-414; these read PGHE…HDMR and RGGRDPRGLD. The 1; approximate repeat unit spans residues 413–417; the sequence is LDARG. The interval 413–472 is 12 X 5 AA tandem repeats of M-E-A-R-[AG]; the sequence is LDARGMEARAMEARGLDARGLEARAMEARAMEARAMEARAMEARAMEARAMEARGMDTRG. 2 consecutive repeat copies span residues 418 to 422 and 423 to 427. A 4; approximate repeat occupies 428–432; it reads LDARG. A 5; approximate repeat occupies 433 to 437; sequence LEARA. Repeat copies occupy residues 438-442, 443-447, 448-452, 453-457, 458-462, and 463-467. Residues 468-472 form a 12; approximate repeat; that stretch reads MDTRG. Omega-N-methylarginine occurs at positions 471 and 478. The interval 512-536 is disordered; it reads MQGASMQGGSQPGGFSPGQSQVTPQ. An interaction with RPO2TC1 region spans residues 517–580; that stretch reads MQGGSQPGGF…EQIQKSTGAP (64 aa). Residues Ser-521 and Ser-527 each carry the phosphoserine modification.

In terms of assembly, the CSTF complex is composed of CSTF1 (50 kDa subunit), CSTF2 (64 kDa subunit) and CSTF3 (77 kDa subunit). CSTF2 directly interacts with CSTF3, SYMPK and RPO2TC1. Interacts with HSF1 in heat-stressed cells. Interacts with CPSF2, CPSF3 and FIP1L1. Interacts with DDX1. Expressed in most somatic cell types (at protein level). Highly expressed in testis, except in meiotic spermatocytes.

It is found in the nucleus. One of the multiple factors required for polyadenylation and 3'-end cleavage of mammalian pre-mRNAs. This subunit is directly involved in the binding to pre-mRNAs. The polypeptide is Cleavage stimulation factor subunit 2 (Cstf2) (Mus musculus (Mouse)).